Consider the following 2148-residue polypeptide: MDALESLLDEVALEGLDGLCLPALWSRLESRSPAFPLPLEPYTQEFLWRALVTHPGISFYEEPRERPDLQLQDRYEEIDLETGILESRRDPVTLEDVYPIHMILENKDGIQGSCRYFKERKDITSSIRSKCLQPRCTMVEAFSRWGKKLIIVASQDMRYRALIGLEGDPDLKLPDFSYCILERLGRSRWQGELQRDLHTTAFKVDAGKLHYHRKILNKNGLITMQSHVIRLPTGAQQHSILLLLNRFHVDRRSKYDILMEKLSMMLSTRSNQIETLGKLREELGLCERTFKRLYQYMLNAGLAKVVSLPLQEIHPECGPCKTKKGTDVMVRCLKLLKEFRRKMEDDHDDDDDEEAISKAVPPVDIVFERDMLTQTYELIERRGTKGISQAEIRVAMNVGKLEARMLCRLLQRFKVVKGFMEDEGRQRTTKYISCVFAEESDLSRQYAREKARGELLTTVSLASVQDESLMPEGEEAFLSDSESEEESSCSGKRRGRGSRGHSRASGDAGPGSRPHHSTPAKGGWKVLNLHPLKKPKSAAVERSRRSSACRDGLDTSSSSELNIPFDPHSMDSHSGDIAVIEEVRLDNPKEGGGSQKGGRHGSGQDKPHKTYRLLKRRNLIIEAVTNLRLIESLFTIQKMIMDQEKQEGVSTKCCKKSIIRLVRNLSEEGLLRLYRTTVIQDGIKKKVDLVVHPSMDQNDPLVRSAIEQVRFRISNSSTANRVKVPPAPAPQEEAEEGNQEPEVPSRSADSEANTSSKPESTRVKKTDEKMGITPLKNYKPVIVPGLGRSIGFLPKMPRLRVMHLFLWYLVYGHPASHTGEQPTFHSERKTGKQEPSRPGVQPSSGDDWDSSEAKNSTESSSWEAEMELSTERVYVDEISWMRYVPPIPIHRDFGFGWALVSDILLCLPLSIFVQVVQVSYKVDNLEDFLNDPLKKHTLIRFLPRHIRQQLLYKRRYIFSVVENLQRLCYMGLLQFGPTEKFQDKDQVFVFLKKNAVIVDTTICDPHYNLAHSSRPFERRLYVLDSMQDVESYWFDLQCICLNTPLGVVRCPCAQKICPDPGSDPEGSLRKEQESAMDKHNLERKCAMLEYTTGSREVVDEGLVPGDGLGAAGLDSSFYAHLKRNWVWTSYIINKARKNNTSENGLTGRLQTFLSKRPMPLGSGGSGRLPLWSEGKADAELCADKEEHFELDREPTPGRNRKVRGGKSQKRKRLKKEPIRKTKRRRRGEHPEAKSKKLRYQDEADQNALRMMTRLRVSWSMQEDGLLMLCRIASNVLNTKVKGPFVTWQVVRDILHATFEESLDKTSHSVGRRARYIVKNPQAFMNYKVCLAEVYQDKALVGDFMSRKDNYEDPKVCAKEFKEFVEKLKEKFSSGLRNPNLEIPDTLQELFAKYRVLAIGDEKDRVRKEDELNSVEDIHFLVLQNLIQSTLSLSNSQSNSCQSFQIFRLYREFREPVLVRAFMECQKRSLVNRRRVSHSQGPKKNRAVPFVPMSYQLSQSYYKLFTWRFPTTVCTESFQFYDRLRANGILDQPDHFSFKDMDSNDPSSDLVAFSLDSPGGHCVTALALFSLGLLSVDVRIPEQIVVVDSSMVESEVMKSLGKDGGLDDDDEEEDLDEGSGTKRQSVEVKAHQASHTKYLLMRGYYTVPGMVSTRNLNPNDSIVVNSCQVKFRLRNTPAPTHLGPTGPTATPLEELQAGPSCLPASFTSLVDPQLHTRCPEEFAHQMAQSGYSPEDVAASLEILQAVAAADCFGVDREKLSRQFSALEKIADKRTRTFLDYIQDLLEQQQVMEVGGNTVRLVAMASAQPWLLPSVRLKDVEIDTKASGDDSQSRLPAGSSIEDHTSEGAPIPPVSSNGTKKRPYCSIQSPETDAEEATRLPAKKPTLQDVCVAASPRPGTEEQTEAQAQFAAPEDAGAEGPRQESQESVGVSGLEQLGCEFQLPENSEDPRGLTESNMAQVAWESGCERVCFVGRPWRGVDGRLNMPVCKGMMEAVLYHIMSRPGVPESCLLQYYQGVLQPVAVLELLRGLESLGCIQKRMLKKPASVSLFSRPVVEGLGQASEAEALSCQGSTVTFYEPTLDCTIRLGRVFPHDINWKQSGSIYRCVPGQQRSLCPCLIVPPGLSQEPRPSHSCYQSSAQPSTGVATSR.

Acidic residues predominate over residues 473–487 (GEEAFLSDSESEEES). 2 disordered regions span residues 473–568 (GEEA…FDPH) and 587–609 (NPKE…KPHK). The segment covering 491-502 (GKRRGRGSRGHS) has biased composition (basic residues). Lysine 533 participates in a covalent cross-link: Glycyl lysine isopeptide (Lys-Gly) (interchain with G-Cter in SUMO2). A Phosphoserine modification is found at serine 666. 2 disordered regions span residues 717-771 (STAN…EKMG) and 818-863 (TGEQ…SSWE). Composition is skewed to basic and acidic residues over residues 759–770 (ESTRVKKTDEKM) and 825–835 (HSERKTGKQEP). Residues lysine 769 and lysine 832 each participate in a glycyl lysine isopeptide (Lys-Gly) (interchain with G-Cter in SUMO2) cross-link. Position 1062 is a phosphoserine (serine 1062). Positions 1186-1195 (EHFELDREPT) are enriched in basic and acidic residues. Disordered regions lie at residues 1186 to 1238 (EHFE…KKLR), 1597 to 1627 (KSLG…SVEV), 1823 to 1881 (KASG…LPAK), 1893 to 1928 (SPRP…ESVG), and 2127 to 2148 (PRPS…ATSR). A Phosphothreonine modification is found at threonine 1195. Over residues 1198 to 1214 (RNRKVRGGKSQKRKRLK) the composition is skewed to basic residues. Residues 1228-1238 (EHPEAKSKKLR) are compositionally biased toward basic and acidic residues. A compositionally biased stretch (acidic residues) spans 1605–1616 (LDDDDEEEDLDE). Phosphoserine occurs at positions 1624, 1853, and 1893. The segment covering 1903–1912 (EAQAQFAAPE) has biased composition (low complexity). Positions 2132–2148 (SCYQSSAQPSTGVATSR) are enriched in polar residues.

It belongs to the TFIIIC subunit 1 family. In terms of assembly, part of the TFIIIC subcomplex TFIIIC2, consisting of six subunits, GTF3C1, GTF3C2, GTF3C3, GTF3C4, GTF3C5 and GTF3C6. Interacts with IGHMBP2. Interacts with MAF1.

It is found in the nucleus. Required for RNA polymerase III-mediated transcription. Component of TFIIIC that initiates transcription complex assembly on tRNA and is required for transcription of 5S rRNA and other stable nuclear and cytoplasmic RNAs. Binds to the box B promoter element. The sequence is that of General transcription factor 3C polypeptide 1 (Gtf3c1) from Rattus norvegicus (Rat).